A 557-amino-acid polypeptide reads, in one-letter code: Dihydroxy-acid dehydratase (557 aa).

Cys47 is a binding site for [2Fe-2S] cluster. Asp79 contributes to the Mg(2+) binding site. Residue Cys120 participates in [2Fe-2S] cluster binding. The Mg(2+) site is built by Asp121 and Lys122. An N6-carboxylysine modification is found at Lys122. Cys192 serves as a coordination point for [2Fe-2S] cluster. Glu444 is a Mg(2+) binding site. The Proton acceptor role is filled by Ser470.

The protein belongs to the IlvD/Edd family. In terms of assembly, homodimer. Requires [2Fe-2S] cluster as cofactor. It depends on Mg(2+) as a cofactor.

It catalyses the reaction (2R)-2,3-dihydroxy-3-methylbutanoate = 3-methyl-2-oxobutanoate + H2O. The catalysed reaction is (2R,3R)-2,3-dihydroxy-3-methylpentanoate = (S)-3-methyl-2-oxopentanoate + H2O. It participates in amino-acid biosynthesis; L-isoleucine biosynthesis; L-isoleucine from 2-oxobutanoate: step 3/4. The protein operates within amino-acid biosynthesis; L-valine biosynthesis; L-valine from pyruvate: step 3/4. Functionally, functions in the biosynthesis of branched-chain amino acids. Catalyzes the dehydration of (2R,3R)-2,3-dihydroxy-3-methylpentanoate (2,3-dihydroxy-3-methylvalerate) into 2-oxo-3-methylpentanoate (2-oxo-3-methylvalerate) and of (2R)-2,3-dihydroxy-3-methylbutanoate (2,3-dihydroxyisovalerate) into 2-oxo-3-methylbutanoate (2-oxoisovalerate), the penultimate precursor to L-isoleucine and L-valine, respectively. This is Dihydroxy-acid dehydratase from Synechococcus sp. (strain CC9902).